Here is a 517-residue protein sequence, read N- to C-terminus: Protein BTN1 (517 aa).

8 helical membrane-spanning segments follow: residues 24–44, 57–77, 88–108, 112–132, 146–166, 169–189, 371–391, and 409–429; these read LFAA…IILS, GVVA…WPLL, VGFC…SSSL, LLGI…FLQL, LGAW…IWWL, GLGV…FPIT, PAII…TFFF, and SITI…SGYV.

The protein belongs to the battenin family.

The protein resides in the vacuole membrane. Functionally, involved in vacuolar transport and vacuole pH homeostasis. Also required for cytokinesis. The sequence is that of Protein BTN1 (BTN1) from Cryptococcus neoformans var. neoformans serotype D (strain B-3501A) (Filobasidiella neoformans).